A 794-amino-acid polypeptide reads, in one-letter code: DNA mismatch repair protein pms1 (794 aa).

2 disordered regions span residues 351-384 (SQIPDSSGDSTDQELPQSIPATESETSDDSSFSY) and 409-442 (GASLAQVSKPLPERLQKDSMRRSSPLNEKVTASS). Over residues 352 to 371 (QIPDSSGDSTDQELPQSIPA) the composition is skewed to polar residues. The segment covering 419 to 429 (LPERLQKDSMR) has biased composition (basic and acidic residues). Polar residues predominate over residues 430–442 (RSSPLNEKVTASS).

Belongs to the DNA mismatch repair MutL/HexB family.

This protein is involved in the repair of mismatches in DNA. This is DNA mismatch repair protein pms1 (pms1) from Schizosaccharomyces pombe (strain 972 / ATCC 24843) (Fission yeast).